A 325-amino-acid polypeptide reads, in one-letter code: Hydroxymethylglutaryl-CoA lyase, mitochondrial (325 aa).

The transit peptide at 1–27 (MATVRKAFPQRLVGLASLRAASTSSMG) directs the protein to the mitochondrion. A Pyruvate carboxyltransferase domain is found at 33 to 300 (VKIVEVGPRD…HTGVNLQKLL (268 aa)). A substrate-binding site is contributed by R41. D42 lines the a divalent metal cation pocket. Position 48 is an N6-acetyllysine; alternate (K48). K48 bears the N6-succinyllysine; alternate mark. At K111 the chain carries N6-acetyllysine. 2 positions are modified to N6-acetyllysine; alternate: K137 and K179. Residues K137 and K179 each carry the N6-succinyllysine; alternate modification. A divalent metal cation contacts are provided by H233 and H235. Residue C266 is part of the active site. N275 contributes to the a divalent metal cation binding site. The short motif at 323–325 (CKL) is the Microbody targeting signal element. At K324 the chain carries N6-acetyllysine.

The protein belongs to the HMG-CoA lyase family. Homodimer; disulfide-linked. Can also form homotetramers. In suckling rat, highest levels in liver and in intestine. Lower levels in heart, kidney and cerebellum. Weak expression in brain cortex, medulla and midbrain. Levels decrease slightly during weaning.

Its subcellular location is the mitochondrion matrix. The protein resides in the peroxisome. The enzyme catalyses (3S)-3-hydroxy-3-methylglutaryl-CoA = acetoacetate + acetyl-CoA. The protein operates within metabolic intermediate metabolism; (S)-3-hydroxy-3-methylglutaryl-CoA degradation; acetoacetate from (S)-3-hydroxy-3-methylglutaryl-CoA: step 1/1. Functionally, mitochondrial 3-hydroxy-3-methylglutaryl-CoA lyase that catalyzes a cation-dependent cleavage of (S)-3-hydroxy-3-methylglutaryl-CoA into acetyl-CoA and acetoacetate, a key step in ketogenesis. Terminal step in leucine catabolism. Ketone bodies (beta-hydroxybutyrate, acetoacetate and acetone) are essential as an alternative source of energy to glucose, as lipid precursors and as regulators of metabolism. The sequence is that of Hydroxymethylglutaryl-CoA lyase, mitochondrial (Hmgcl) from Rattus norvegicus (Rat).